A 141-amino-acid polypeptide reads, in one-letter code: Large ribosomal subunit protein uL11 (141 aa).

It belongs to the universal ribosomal protein uL11 family. As to quaternary structure, part of the ribosomal stalk of the 50S ribosomal subunit. Interacts with L10 and the large rRNA to form the base of the stalk. L10 forms an elongated spine to which L12 dimers bind in a sequential fashion forming a multimeric L10(L12)X complex. In terms of processing, one or more lysine residues are methylated.

In terms of biological role, forms part of the ribosomal stalk which helps the ribosome interact with GTP-bound translation factors. This Synechocystis sp. (strain ATCC 27184 / PCC 6803 / Kazusa) protein is Large ribosomal subunit protein uL11.